Here is a 320-residue protein sequence, read N- to C-terminus: Homeobox-leucine zipper protein HOX25 (320 aa).

Positions 79–139 (AAARKRRLTA…NRRARWKTKQ (61 aa)) form a DNA-binding region, homeobox. The leucine-zipper stretch occupies residues 138–182 (KQLELDFDRLRAAHDELLAGRTALAADNESLRSQVILLTEKLQAN). Disordered stretches follow at residues 181-209 (ANGK…KSFQ) and 249-282 (DSPE…PSSS). A compositionally biased stretch (acidic residues) spans 265–278 (SEDDCGGAGSDDDY).

Belongs to the HD-ZIP homeobox family. Class I subfamily. In terms of tissue distribution, expressed in roots, leaf sheaths and blades and panicles.

The protein localises to the nucleus. Its function is as follows. Probable transcription factor. The protein is Homeobox-leucine zipper protein HOX25 (HOX25) of Oryza sativa subsp. japonica (Rice).